The sequence spans 189 residues: Thioredoxin-like protein CITRX, chloroplastic (189 aa).

The transit peptide at 1-56 (MAMAAAASLLPASAAPTLPGRAFRPPRNSTPTASLSCDGGSRCRGVGLGVILGGCR) directs the protein to the chloroplast. One can recognise a Thioredoxin domain in the interval 72–189 (GSGKYIAPDY…MIRNIIDNEL (118 aa)). Residues cysteine 112 and cysteine 115 each act as nucleophile in the active site. An intrachain disulfide couples cysteine 112 to cysteine 115.

This sequence belongs to the thioredoxin family. Plant CITRX-type subfamily.

It localises to the plastid. The protein localises to the chloroplast. Its function is as follows. Probable thiol-disulfide oxidoreductase that may play a role in proper chloroplast development. The chain is Thioredoxin-like protein CITRX, chloroplastic from Oryza sativa subsp. japonica (Rice).